The sequence spans 187 residues: Elongation factor P (187 aa).

It belongs to the elongation factor P family.

It localises to the cytoplasm. Its pathway is protein biosynthesis; polypeptide chain elongation. Its function is as follows. Involved in peptide bond synthesis. Stimulates efficient translation and peptide-bond synthesis on native or reconstituted 70S ribosomes in vitro. Probably functions indirectly by altering the affinity of the ribosome for aminoacyl-tRNA, thus increasing their reactivity as acceptors for peptidyl transferase. This is Elongation factor P (efp) from Synechocystis sp. (strain ATCC 27184 / PCC 6803 / Kazusa).